A 378-amino-acid chain; its full sequence is Palmitoyltransferase PFA4 (378 aa).

The Cytoplasmic portion of the chain corresponds to 1 to 9 (MPVKLRWPW). Residues 10-30 (LGIAIPTFLISFIGYGAHYFI) form a helical membrane-spanning segment. Topologically, residues 31–40 (LSNFLSVPKQ) are lumenal. The chain crosses the membrane as a helical span at residues 41-61 (ITFEFCLSMIWLSYYLAICTN). Residues 62 to 119 (PGRPLPNYKPPPDIWRNFCKKCQSYKPERSHHCKTCNQCVLMMDHHCPWTMNCVGFAN) lie on the Cytoplasmic side of the membrane. Positions 78–128 (NFCKKCQSYKPERSHHCKTCNQCVLMMDHHCPWTMNCVGFANYPHFLRFLF) constitute a DHHC domain. Cysteine 108 acts as the S-palmitoyl cysteine intermediate in catalysis. The chain crosses the membrane as a helical span at residues 120–140 (YPHFLRFLFWIIVTTSVLFCI). At 141–164 (QAKRIYFIWQQRHLPGYFFKKSEL) the chain is on the lumenal side. Residues 165-185 (IFLTISSPLNSFVLLTITILF) form a helical membrane-spanning segment. At 186-378 (LRCLFNQILN…DDFGVDVDME (193 aa)) the chain is on the cytoplasmic side.

Belongs to the DHHC palmitoyltransferase family. PFA4 subfamily. In terms of processing, autopalmitoylated.

Its subcellular location is the endoplasmic reticulum membrane. The enzyme catalyses L-cysteinyl-[protein] + hexadecanoyl-CoA = S-hexadecanoyl-L-cysteinyl-[protein] + CoA. Its function is as follows. Mediates the reversible addition of palmitate to target proteins, thereby regulating their membrane association and biological function. Palmitoylates several amino acid permeases. Palmitoylates chitin synthase CHS3, which is required for its proper export from the ER. Can palmitoylate RAS2 in vitro. This Saccharomyces cerevisiae (strain ATCC 204508 / S288c) (Baker's yeast) protein is Palmitoyltransferase PFA4.